A 732-amino-acid chain; its full sequence is Photosystem I P700 chlorophyll a apoprotein A1 (732 aa).

8 helical membrane passes run 61–84, 145–168, 185–209, 278–296, 317–340, 356–382, 414–436, and 510–528; these read VFSS…FHGA, LKYA…FHMH, NAGQ…HIAL, IASH…GIIA, WHSR…HHIY, LSLF…IFMI, IIMG…IYIH, and FMVH…LILM. [4Fe-4S] cluster contacts are provided by cysteine 552 and cysteine 561. 2 consecutive transmembrane segments (helical) span residues 568–589 and 644–666; these read HVFL…HFFW and LSGY…MFLW. Histidine 655 serves as a coordination point for chlorophyll a'. Chlorophyll a is bound by residues methionine 663 and tyrosine 671. Tryptophan 672 contributes to the phylloquinone binding site. Residues 704–724 traverse the membrane as a helical segment; that stretch reads AVGLVHYMLGGIGTTWAFFLA.

This sequence belongs to the PsaA/PsaB family. As to quaternary structure, the PsaA/B heterodimer binds the P700 chlorophyll special pair and subsequent electron acceptors. PSI consists of a core antenna complex that captures photons, and an electron transfer chain that converts photonic excitation into a charge separation. The eukaryotic PSI reaction center is composed of at least 11 subunits. P700 is a chlorophyll a/chlorophyll a' dimer, A0 is one or more chlorophyll a, A1 is one or both phylloquinones and FX is a shared 4Fe-4S iron-sulfur center. serves as cofactor.

The protein resides in the plastid. It localises to the chloroplast thylakoid membrane. The catalysed reaction is reduced [plastocyanin] + hnu + oxidized [2Fe-2S]-[ferredoxin] = oxidized [plastocyanin] + reduced [2Fe-2S]-[ferredoxin]. In terms of biological role, psaA and PsaB bind P700, the primary electron donor of photosystem I (PSI), as well as the electron acceptors A0, A1 and FX. PSI is a plastocyanin/cytochrome c6-ferredoxin oxidoreductase, converting photonic excitation into a charge separation, which transfers an electron from the donor P700 chlorophyll pair to the spectroscopically characterized acceptors A0, A1, FX, FA and FB in turn. Oxidized P700 is reduced on the lumenal side of the thylakoid membrane by plastocyanin or cytochrome c6. The protein is Photosystem I P700 chlorophyll a apoprotein A1 of Heterocapsa triquetra (Dinoflagellate).